We begin with the raw amino-acid sequence, 132 residues long: UPF0201 protein MTH_433 (132 aa).

The protein belongs to the UPF0201 family.

In Methanothermobacter thermautotrophicus (strain ATCC 29096 / DSM 1053 / JCM 10044 / NBRC 100330 / Delta H) (Methanobacterium thermoautotrophicum), this protein is UPF0201 protein MTH_433.